A 122-amino-acid polypeptide reads, in one-letter code: Small ribosomal subunit protein uS13 (122 aa).

A disordered region spans residues 93–122 (RRGLPVRGQNTKTNARTRKGPKRTAGGKKK). The span at 107–122 (ARTRKGPKRTAGGKKK) shows a compositional bias: basic residues.

This sequence belongs to the universal ribosomal protein uS13 family. In terms of assembly, part of the 30S ribosomal subunit. Forms a loose heterodimer with protein S19. Forms two bridges to the 50S subunit in the 70S ribosome.

Located at the top of the head of the 30S subunit, it contacts several helices of the 16S rRNA. In the 70S ribosome it contacts the 23S rRNA (bridge B1a) and protein L5 of the 50S subunit (bridge B1b), connecting the 2 subunits; these bridges are implicated in subunit movement. Contacts the tRNAs in the A and P-sites. This Syntrophomonas wolfei subsp. wolfei (strain DSM 2245B / Goettingen) protein is Small ribosomal subunit protein uS13.